Reading from the N-terminus, the 66-residue chain is Conotoxin Lt5.6 (66 aa).

The signal sequence occupies residues 1-19; sequence MLCLPVFIILLLLASPAAP. A propeptide spanning residues 20 to 54 is cleaved from the precursor; the sequence is KSLETRIQNDLIRAGLTDADLKTEKGFLSGLLNVA.

The protein belongs to the conotoxin T superfamily. Post-translationally, contains 2 disulfide bonds that can be either 'C1-C3, C2-C4' or 'C1-C4, C2-C3', since these disulfide connectivities have been observed for conotoxins with cysteine framework V (for examples, see AC P0DQQ7 and AC P81755). In terms of tissue distribution, expressed by the venom duct.

It is found in the secreted. This Conus litteratus (Lettered cone) protein is Conotoxin Lt5.6.